Here is a 380-residue protein sequence, read N- to C-terminus: Queuine tRNA-ribosyltransferase (380 aa).

Residue Asp96 is the Proton acceptor of the active site. Substrate contacts are provided by residues Asp96–Phe100, Asp150, Gln193, and Gly220. The tract at residues Gly251–Ser257 is RNA binding. Asp270 (nucleophile) is an active-site residue. The RNA binding; important for wobble base 34 recognition stretch occupies residues Thr275–Arg279. Cys308, Cys310, Cys313, and His339 together coordinate Zn(2+).

This sequence belongs to the queuine tRNA-ribosyltransferase family. In terms of assembly, homodimer. Within each dimer, one monomer is responsible for RNA recognition and catalysis, while the other monomer binds to the replacement base PreQ1. Zn(2+) serves as cofactor.

The catalysed reaction is 7-aminomethyl-7-carbaguanine + guanosine(34) in tRNA = 7-aminomethyl-7-carbaguanosine(34) in tRNA + guanine. The protein operates within tRNA modification; tRNA-queuosine biosynthesis. Its function is as follows. Catalyzes the base-exchange of a guanine (G) residue with the queuine precursor 7-aminomethyl-7-deazaguanine (PreQ1) at position 34 (anticodon wobble position) in tRNAs with GU(N) anticodons (tRNA-Asp, -Asn, -His and -Tyr). Catalysis occurs through a double-displacement mechanism. The nucleophile active site attacks the C1' of nucleotide 34 to detach the guanine base from the RNA, forming a covalent enzyme-RNA intermediate. The proton acceptor active site deprotonates the incoming PreQ1, allowing a nucleophilic attack on the C1' of the ribose to form the product. After dissociation, two additional enzymatic reactions on the tRNA convert PreQ1 to queuine (Q), resulting in the hypermodified nucleoside queuosine (7-(((4,5-cis-dihydroxy-2-cyclopenten-1-yl)amino)methyl)-7-deazaguanosine). This chain is Queuine tRNA-ribosyltransferase, found in Streptococcus sanguinis (strain SK36).